Reading from the N-terminus, the 133-residue chain is ATP synthase epsilon chain, chloroplastic (133 aa).

The protein belongs to the ATPase epsilon chain family. F-type ATPases have 2 components, CF(1) - the catalytic core - and CF(0) - the membrane proton channel. CF(1) has five subunits: alpha(3), beta(3), gamma(1), delta(1), epsilon(1). CF(0) has three main subunits: a, b and c.

It is found in the plastid. It localises to the chloroplast thylakoid membrane. Functionally, produces ATP from ADP in the presence of a proton gradient across the membrane. The sequence is that of ATP synthase epsilon chain, chloroplastic from Cyanidium caldarium (Red alga).